We begin with the raw amino-acid sequence, 444 residues long: Xylose isomerase (444 aa).

2 residues coordinate Mg(2+): aspartate 307 and aspartate 309.

The protein belongs to the xylose isomerase family. As to quaternary structure, homotetramer. The cofactor is Mg(2+).

Its subcellular location is the cytoplasm. The catalysed reaction is alpha-D-xylose = alpha-D-xylulofuranose. The protein is Xylose isomerase of Thermotoga neapolitana (strain ATCC 49049 / DSM 4359 / NBRC 107923 / NS-E).